The chain runs to 51 residues: Bacteriocin aureocin A53 (51 aa).

Methionine 1 is subject to N-formylmethionine.

It localises to the secreted. Functionally, antibacterial peptide active against a broad range of lactic acid bacteria, L.monocytogenes and many epidemiologically unrelated strains of S.aureus involved in bovine mastitis. The polypeptide is Bacteriocin aureocin A53 (aucA) (Staphylococcus aureus).